The primary structure comprises 341 residues: Heterogeneous nuclear ribonucleoproteins A2/B1 (341 aa).

2 consecutive RRM domains span residues 9-92 (RKLF…ESGK) and 100-179 (KKLF…LSRQ). Lysine 10 is covalently cross-linked (Glycyl lysine isopeptide (Lys-Gly) (interchain with G-Cter in SUMO2)). Phosphoserine is present on serine 17. At arginine 26 the chain carries Omega-N-methylarginine. Serine 73 is subject to Phosphoserine. Lysine 92 is modified (N6,N6-dimethyllysine; alternate). Lysine 92 participates in a covalent cross-link: Glycyl lysine isopeptide (Lys-Gly) (interchain with G-Cter in SUMO2); alternate. Glycyl lysine isopeptide (Lys-Gly) (interchain with G-Cter in SUMO2) cross-links involve residues lysine 100, lysine 108, and lysine 125. Position 128 is a phosphothreonine (threonine 128). Phosphoserine is present on serine 137. Lysine 140 participates in a covalent cross-link: Glycyl lysine isopeptide (Lys-Gly) (interchain with G-Cter in SUMO2). Phosphothreonine is present on threonine 147. Residues lysine 156 and lysine 161 each participate in a glycyl lysine isopeptide (Lys-Gly) (interchain with G-Cter in SUMO2); alternate cross-link. N6-acetyllysine; alternate is present on residues lysine 156 and lysine 161. Position 164 is a phosphothreonine (threonine 164). Residue lysine 174 forms a Glycyl lysine isopeptide (Lys-Gly) (interchain with G-Cter in SUMO2) linkage. 2 positions are modified to phosphoserine: serine 177 and serine 189. Residues 181–341 (MQEVQSSRSG…SGGYGGRSRY (161 aa)) are disordered. Residues 190–211 (GRGGNFGFGDSRGGGGNFGPGP) are compositionally biased toward gly residues. Asymmetric dimethylarginine; alternate is present on arginine 191. At arginine 191 the chain carries Dimethylated arginine; alternate. Arginine 191 carries the post-translational modification Omega-N-methylarginine; alternate. Phosphoserine is present on serine 200. Arginine 201 carries the asymmetric dimethylarginine; alternate modification. A Dimethylated arginine; alternate modification is found at arginine 201. An Omega-N-methylarginine; alternate modification is found at arginine 201. At serine 213 the chain carries Phosphoserine. Arginine 216 bears the Omega-N-methylarginine mark. Serine 219 and serine 224 each carry phosphoserine. Position 226 is an omega-N-methylarginine (arginine 226). Serine 247 carries the post-translational modification Phosphoserine. Asymmetric dimethylarginine; alternate is present on arginine 254. Position 254 is an omega-N-methylarginine; alternate (arginine 254). Residues 296 to 335 (QQPSNYGPMKSGNFGGSRNMGGPYGGGNYGPGGSGGSGGY) are nuclear targeting sequence. Over residues 308-341 (NFGGSRNMGGPYGGGNYGPGGSGGSGGYGGRSRY) the composition is skewed to gly residues. A Phosphoserine modification is found at serine 312. Arginine 313 bears the Omega-N-methylarginine mark. Residue tyrosine 319 is modified to Phosphotyrosine. Phosphoserine is present on residues serine 329 and serine 332. Tyrosine 335 is subject to Phosphotyrosine. Arginine 338 carries the omega-N-methylarginine modification.

In terms of assembly, identified in the spliceosome C complex. Identified in a IGF2BP1-dependent mRNP granule complex containing untranslated mRNAs. Interacts with IGF2BP1. Interacts with C9orf72. Interacts with DGCR8. Interacts with TARDBP. Interacts with CKAP5. Interacts with PPIA/CYPA. Interacts (via C-terminus) with FAM76B; the interaction results in retention of HNRNPA2B1 in the nucleus and inhibition of the NF-kappa-B-mediated inflammatory pathway. Interacts with NF-kappa-B inhibitors NFKBIA and NFKBIE; the interaction may be mediated by the RRM2 domain of HNRNPA2B1, and HNRNPA2B1 may interact simultaneously with FAM76B and either NFKBIA or NFKBIE to form a complex. Sumoylated in exosomes, promoting miRNAs-binding. Post-translationally, asymmetric dimethylation at Arg-254 constitutes the major methylation site. According to a report, methylation affects subcellular location and promotes nuclear localization. According to another report, methylation at Arg-254 does not influence nucleocytoplasmic shuttling.

The protein localises to the nucleus. The protein resides in the nucleoplasm. It is found in the cytoplasmic granule. Its subcellular location is the secreted. It localises to the extracellular exosome. Its function is as follows. Heterogeneous nuclear ribonucleoprotein (hnRNP) that associates with nascent pre-mRNAs, packaging them into hnRNP particles. The hnRNP particle arrangement on nascent hnRNA is non-random and sequence-dependent and serves to condense and stabilize the transcripts and minimize tangling and knotting. Packaging plays a role in various processes such as transcription, pre-mRNA processing, RNA nuclear export, subcellular location, mRNA translation and stability of mature mRNAs. Forms hnRNP particles with at least 20 other different hnRNP and heterogeneous nuclear RNA in the nucleus. Involved in transport of specific mRNAs to the cytoplasm in oligodendrocytes and neurons: acts by specifically recognizing and binding the A2RE (21 nucleotide hnRNP A2 response element) or the A2RE11 (derivative 11 nucleotide oligonucleotide) sequence motifs present on some mRNAs, and promotes their transport to the cytoplasm. Specifically binds single-stranded telomeric DNA sequences, protecting telomeric DNA repeat against endonuclease digestion. Also binds other RNA molecules, such as primary miRNA (pri-miRNAs): acts as a nuclear 'reader' of the N6-methyladenosine (m6A) mark by specifically recognizing and binding a subset of nuclear m6A-containing pri-miRNAs. Binding to m6A-containing pri-miRNAs promotes pri-miRNA processing by enhancing binding of DGCR8 to pri-miRNA transcripts. Involved in miRNA sorting into exosomes following sumoylation, possibly by binding (m6A)-containing pre-miRNAs. Acts as a regulator of efficiency of mRNA splicing, possibly by binding to m6A-containing pre-mRNAs. Plays a role in the splicing of pyruvate kinase PKM by binding repressively to sequences flanking PKM exon 9, inhibiting exon 9 inclusion and resulting in exon 10 inclusion and production of the PKM M2 isoform. The polypeptide is Heterogeneous nuclear ribonucleoproteins A2/B1 (HNRNPA2B1) (Saguinus oedipus (Cotton-top tamarin)).